A 1079-amino-acid chain; its full sequence is Transport and Golgi organization protein 6 homolog (1079 aa).

A helical membrane pass occupies residues 473-493; it reads VPVLLDSLLPLLRVFFSLYCF. Position 561 is a phosphoserine (Ser561). Positions 767–818 are disordered; that stretch reads AQSTLNQKDPGQKIEEQRQTSPDISTEGAQKPPRTGQGSSGPCTATSQPPGS. Composition is skewed to polar residues over residues 785 to 794 and 802 to 818; these read QTSPDISTEG and GQGS…PPGS. HEAT repeat units lie at residues 864-902 and 937-973; these read LLQI…LVDL and SKYR…CQCL.

Belongs to the Tango6 family.

It is found in the membrane. The protein is Transport and Golgi organization protein 6 homolog (Tango6) of Mus musculus (Mouse).